Reading from the N-terminus, the 341-residue chain is Tetraacyldisaccharide 4'-kinase (341 aa).

65–72 contacts ATP; the sequence is TVGGSGKT.

The protein belongs to the LpxK family.

The catalysed reaction is a lipid A disaccharide + ATP = a lipid IVA + ADP + H(+). The protein operates within glycolipid biosynthesis; lipid IV(A) biosynthesis; lipid IV(A) from (3R)-3-hydroxytetradecanoyl-[acyl-carrier-protein] and UDP-N-acetyl-alpha-D-glucosamine: step 6/6. In terms of biological role, transfers the gamma-phosphate of ATP to the 4'-position of a tetraacyldisaccharide 1-phosphate intermediate (termed DS-1-P) to form tetraacyldisaccharide 1,4'-bis-phosphate (lipid IVA). This is Tetraacyldisaccharide 4'-kinase from Shewanella woodyi (strain ATCC 51908 / MS32).